The chain runs to 98 residues: Defensin (98 aa).

Cystine bridges form between Cys61/Cys88, Cys74/Cys94, and Cys78/Cys96.

The protein belongs to the invertebrate defensin family. Type 1 subfamily.

The polypeptide is Defensin (Mamestra brassicae (Cabbage moth)).